The sequence spans 875 residues: Protein translocase subunit SecA (875 aa).

ATP-binding positions include Gln-87, 105-109, and Asp-512; that span reads GEGKT. Zn(2+)-binding residues include Cys-860, Cys-862, Cys-871, and His-872.

The protein belongs to the SecA family. As to quaternary structure, monomer and homodimer. Part of the essential Sec protein translocation apparatus which comprises SecA, SecYEG and auxiliary proteins SecDF-YajC and YidC. Requires Zn(2+) as cofactor.

The protein resides in the cell inner membrane. The protein localises to the cytoplasm. It carries out the reaction ATP + H2O + cellular proteinSide 1 = ADP + phosphate + cellular proteinSide 2.. Part of the Sec protein translocase complex. Interacts with the SecYEG preprotein conducting channel. Has a central role in coupling the hydrolysis of ATP to the transfer of proteins into and across the cell membrane, serving both as a receptor for the preprotein-SecB complex and as an ATP-driven molecular motor driving the stepwise translocation of polypeptide chains across the membrane. This chain is Protein translocase subunit SecA, found in Buchnera aphidicola subsp. Acyrthosiphon pisum (strain APS) (Acyrthosiphon pisum symbiotic bacterium).